Here is a 277-residue protein sequence, read N- to C-terminus: Ribosomal RNA small subunit methyltransferase A (277 aa).

Positions 15, 17, 42, 64, 89, and 109 each coordinate S-adenosyl-L-methionine.

The protein belongs to the class I-like SAM-binding methyltransferase superfamily. rRNA adenine N(6)-methyltransferase family. RsmA subfamily.

Its subcellular location is the cytoplasm. The catalysed reaction is adenosine(1518)/adenosine(1519) in 16S rRNA + 4 S-adenosyl-L-methionine = N(6)-dimethyladenosine(1518)/N(6)-dimethyladenosine(1519) in 16S rRNA + 4 S-adenosyl-L-homocysteine + 4 H(+). In terms of biological role, specifically dimethylates two adjacent adenosines (A1518 and A1519) in the loop of a conserved hairpin near the 3'-end of 16S rRNA in the 30S particle. May play a critical role in biogenesis of 30S subunits. This is Ribosomal RNA small subunit methyltransferase A from Synechococcus sp. (strain CC9311).